The following is a 296-amino-acid chain: Pre-mRNA-splicing factor CWC23 (296 aa).

Residues 14–86 form the J domain; that stretch reads DLYKLLELNY…AKKAEYDQWV (73 aa).

This sequence belongs to the DnaJ family. In terms of assembly, associated with the spliceosome.

It localises to the cytoplasm. Its subcellular location is the nucleus. Its function is as follows. Involved in pre-mRNA splicing. May be involved in endoplasmic reticulum-associated protein degradation (ERAD) and required for growth at low and high temperatures. This chain is Pre-mRNA-splicing factor CWC23 (CWC23), found in Candida glabrata (strain ATCC 2001 / BCRC 20586 / JCM 3761 / NBRC 0622 / NRRL Y-65 / CBS 138) (Yeast).